Reading from the N-terminus, the 307-residue chain is Glycine--tRNA ligase alpha subunit (307 aa).

It belongs to the class-II aminoacyl-tRNA synthetase family. As to quaternary structure, tetramer of two alpha and two beta subunits.

Its subcellular location is the cytoplasm. The enzyme catalyses tRNA(Gly) + glycine + ATP = glycyl-tRNA(Gly) + AMP + diphosphate. This Xylella fastidiosa (strain M23) protein is Glycine--tRNA ligase alpha subunit.